We begin with the raw amino-acid sequence, 209 residues long: uncharacterized protein (209 aa).

A coiled-coil region spans residues 41–76 (NVENLCLIRNKLKTDIENLLENKIDVENKLLVLRNQ).

This is an uncharacterized protein from Acanthamoeba polyphaga (Amoeba).